Consider the following 141-residue polypeptide: Probable mitochondrial pyruvate carrier 1 (141 aa).

Helical transmembrane passes span 31–52 (YLCSTHFWGPLSNFGIPIAAIL) and 60–82 (LISGRMTGALILYSSVFMRYAWM).

Belongs to the mitochondrial pyruvate carrier (MPC) (TC 2.A.105) family. In terms of assembly, the functional 150 kDa pyruvate import complex is a heteromer of mpc1 and mpc2.

The protein localises to the mitochondrion. It localises to the mitochondrion inner membrane. Mediates the uptake of pyruvate into mitochondria. The chain is Probable mitochondrial pyruvate carrier 1 from Schizosaccharomyces pombe (strain 972 / ATCC 24843) (Fission yeast).